The chain runs to 126 residues: Small ribosomal subunit protein uS12 (126 aa).

Residues 1-26 form a disordered region; sequence MPTINQLVRKGRASETTKSKSPALQD. D89 carries the 3-methylthioaspartic acid modification. Residues 101-126 form a disordered region; it reads SLDTQGVKDRKQARSKYGAKRAKAAK. Residues 113–126 show a composition bias toward basic residues; it reads ARSKYGAKRAKAAK.

The protein belongs to the universal ribosomal protein uS12 family. Part of the 30S ribosomal subunit. Contacts proteins S8 and S17. May interact with IF1 in the 30S initiation complex.

Functionally, with S4 and S5 plays an important role in translational accuracy. In terms of biological role, interacts with and stabilizes bases of the 16S rRNA that are involved in tRNA selection in the A site and with the mRNA backbone. Located at the interface of the 30S and 50S subunits, it traverses the body of the 30S subunit contacting proteins on the other side and probably holding the rRNA structure together. The combined cluster of proteins S8, S12 and S17 appears to hold together the shoulder and platform of the 30S subunit. In Burkholderia pseudomallei (strain 1106a), this protein is Small ribosomal subunit protein uS12.